A 564-amino-acid polypeptide reads, in one-letter code: Apyrase (564 aa).

The N-terminal stretch at 1 to 25 (MAGKPGIQLFVIFLLLSSFAAVVWA) is a signal peptide. A divalent metal cation is bound by residues Asp48, His50, Asp99, Asn131, His234, and His258. Residue Arg371 participates in AMP binding. Asn391 carries an N-linked (GlcNAc...) asparagine glycan. AMP-binding residues include Arg406, Phe425, and Asp515.

The protein belongs to the 5'-nucleotidase family. Requires a divalent metal cation as cofactor. In terms of tissue distribution, female salivary gland (at protein level). Low-level expression in male tissues. Not detected in female carcasses without salivary glands.

Its subcellular location is the secreted. The enzyme catalyses a ribonucleoside 5'-triphosphate + 2 H2O = a ribonucleoside 5'-phosphate + 2 phosphate + 2 H(+). Its function is as follows. Facilitates hematophagy by inhibiting ADP-dependent platelet aggregation in the host. Cleaves adenosine triphosphate (ATP) and adenosine diphosphate (ADP) to adenosine monophosphate (AMP) and inorganic phosphate. May reduce probing time by facilitating the speed of locating blood. This is Apyrase from Aedes albopictus (Asian tiger mosquito).